A 192-amino-acid chain; its full sequence is MQTGNLWQVLGLCLLLVGAWAQDDTEQNPYEVSISGNSVELTCPKDFENGIQWKRNNEQMKGHNEKYLLLDQFSEMESSGYYQCLATEGNTEAAHTLYLKARVCKNCMEVNLLEVATIIVVDICVTLGLLLLVYYWSKSRKAKATPMTRGAGAGGRPRGQNRERPPPVPNPDYEPIRKGQRDLYSGLNQRGV.

A signal peptide spans 1-21 (MQTGNLWQVLGLCLLLVGAWA). At 22–111 (QDDTEQNPYE…RVCKNCMEVN (90 aa)) the chain is on the extracellular side. Residues 27–98 (QNPYEVSISG…GNTEAAHTLY (72 aa)) enclose the Ig-like domain. Cysteine 43 and cysteine 84 form a disulfide bridge. Residues 112–137 (LLEVATIIVVDICVTLGLLLLVYYWS) form a helical membrane-spanning segment. The Cytoplasmic portion of the chain corresponds to 138–192 (KSRKAKATPMTRGAGAGGRPRGQNRERPPPVPNPDYEPIRKGQRDLYSGLNQRGV). Residues 146 to 192 (PMTRGAGAGGRPRGQNRERPPPVPNPDYEPIRKGQRDLYSGLNQRGV) form a disordered region. The tract at residues 160 to 177 (QNRERPPPVPNPDYEPIR) is NUMB-binding region. One can recognise an ITAM domain in the interval 163–190 (ERPPPVPNPDYEPIRKGQRDLYSGLNQR). Residues 164 to 171 (RPPPVPNP) form a proline-rich sequence region. Residues tyrosine 173 and tyrosine 184 each carry the phosphotyrosine modification.

The TCR-CD3 complex is composed of a CD3D/CD3E and a CD3G/CD3E heterodimers that preferentially associate with TCRalpha and TCRbeta, respectively, to form TCRalpha/CD3E/CD3G and TCRbeta/CD3G/CD3E trimers. In turn, the hexamer interacts with CD3Z homodimer to form the TCR-CD3 complex. Alternatively, TCRalpha and TCRbeta can be replaced by TCRgamma and TCRdelta. Interacts with CD6. Interacts (via Proline-rich sequence) with NCK1; the interaction is ligand dependent but independent of tyrosine kinase activation. In terms of processing, phosphorylated on Tyr residues after T-cell receptor triggering by LCK in association with CD4/CD8.

Its subcellular location is the cell membrane. Functionally, part of the TCR-CD3 complex present on T-lymphocyte cell surface that plays an essential role in adaptive immune response. When antigen presenting cells (APCs) activate T-cell receptor (TCR), TCR-mediated signals are transmitted across the cell membrane by the CD3 chains CD3D, CD3E, CD3G and CD3Z. All CD3 chains contain immunoreceptor tyrosine-based activation motifs (ITAMs) in their cytoplasmic domain. Upon TCR engagement, these motifs become phosphorylated by Src family protein tyrosine kinases LCK and FYN, resulting in the activation of downstream signaling pathways. In addition of this role of signal transduction in T-cell activation, CD3E plays an essential role in correct T-cell development. Also participates in internalization and cell surface down-regulation of TCR-CD3 complexes via endocytosis sequences present in CD3E cytosolic region. In addition to its role as a TCR coreceptor, it serves as a receptor for ITPRIPL1. Ligand recognition inhibits T-cell activation by promoting interaction with NCK1, which prevents CD3E-ZAP70 interaction and blocks the ERK-NFkB signaling cascade and calcium influx. The sequence is that of T-cell surface glycoprotein CD3 epsilon chain (CD3E) from Ovis aries (Sheep).